Here is a 512-residue protein sequence, read N- to C-terminus: Keratin, type I cytoskeletal 24 (512 aa).

A disordered region spans residues 1–21 (MFCSAQKGSCSSRVSSSGAVG). The head stretch occupies residues 1–140 (MFCSAQKGSC…GYDGGLLSGS (140 aa)). Low complexity predominate over residues 8–21 (GSCSSRVSSSGAVG). A coil 1A region spans residues 141 to 176 (EKQTMQDLNDRLANYLDKVRALEEANTDLECKIKDW). One can recognise an IF rod domain in the interval 141 to 455 (EKQTMQDLND…RLLNGDGGGC (315 aa)). The linker 1 stretch occupies residues 177–197 (YGKHGSVKGGSGRDYSQYYSI). Residues 198–289 (IEDLKKQILS…KNHEEEMKCM (92 aa)) form a coil 1B region. A linker 12 region spans residues 290–312 (QGSSGGDVTVEMNAAPGVDLTKL). The interval 313 to 451 (LNDMRAQYEA…ETYRRLLNGD (139 aa)) is coil 2. The interval 452 to 512 (GGGCDYRNLV…VSNISEVKIK (61 aa)) is tail.

Belongs to the intermediate filament family. In terms of assembly, heterotetramer of two type I and two type II keratins.

The polypeptide is Keratin, type I cytoskeletal 24 (Krt24) (Mus musculus (Mouse)).